The primary structure comprises 254 residues: Triosephosphate isomerase 2 (254 aa).

Asparagine 9–lysine 11 provides a ligand contact to substrate. The active-site Electrophile is the histidine 96. Glutamate 168 serves as the catalytic Proton acceptor. Substrate is bound by residues glycine 174 and serine 212.

This sequence belongs to the triosephosphate isomerase family. In terms of assembly, homodimer.

It is found in the cytoplasm. It catalyses the reaction D-glyceraldehyde 3-phosphate = dihydroxyacetone phosphate. The protein operates within polyol metabolism; glycerol degradation. Functionally, involved in the glycerol metabolism. Catalyzes stereospecifically the conversion of dihydroxyacetone phosphate (DHAP) to D-glyceraldehyde-3-phosphate (G3P). The sequence is that of Triosephosphate isomerase 2 from Listeria innocua serovar 6a (strain ATCC BAA-680 / CLIP 11262).